A 473-amino-acid chain; its full sequence is MAP kinase-activated protein kinase 5 (473 aa).

The 283-residue stretch at 22–304 folds into the Protein kinase domain; the sequence is INWTQKLGAG…IEGVLDHPWL (283 aa). ATP-binding positions include 28-36 and K51; that span reads LGAGISGPV. The residue at position 115 (S115) is a Phosphoserine; by PKA. Residue D148 is the Proton acceptor of the active site. Residue T182 is modified to Phosphothreonine; by MAPK11, MAPK14, MAPK4, MAPK6 and PKA. Phosphoserine is present on residues S212 and S354. Positions 409 to 440 form a coiled coil; the sequence is ENEDEKLNEVMQEAWKYNRECKLLRDALQSFS.

It belongs to the protein kinase superfamily. CAMK Ser/Thr protein kinase family. As to quaternary structure, interacts with SQSTM1. Interacts with ERK3/MAPK6 and ERK4/MAPK4 (via FRIEDE motif); the interaction is direct. Interacts with YWHAE; the interaction prevents phosphorylation of HSP27/HSPB1 leading to disrupt F-actin polymerization. Phosphorylated on Thr-182 ERK3/MAPK6 or ERK4/MAPK4; which is the regulatory phosphorylation site and is located on the T-loop/loop 12, leading to activation. Phosphorylation at Thr-182 by p38-alpha/MAPK14, p38-beta/MAPK11 is subject to debate. Phosphorylated at Ser-115 by PKA/PRKACA, leading to localization to the cytoplasm. Autophosphorylated. Expressed ubiquitously.

It localises to the cytoplasm. The protein localises to the nucleus. The enzyme catalyses L-seryl-[protein] + ATP = O-phospho-L-seryl-[protein] + ADP + H(+). It carries out the reaction L-threonyl-[protein] + ATP = O-phospho-L-threonyl-[protein] + ADP + H(+). Its activity is regulated as follows. Activated following phosphorylation at Thr-182 by p38-alpha/MAPK14, p38-beta/MAPK11, ERK2/MAPK1, ERK3/MAPK6, and ERK4/MAPK4. Activated by stress-related extracellular stimuli; such as H(2)O(2), arsenite, anisomycin TNF alpha and also PMA and the calcium ionophore A23187; but to a lesser extent. In vitro, activated by SQSTM1. Inhibited by diterpenoid alkaloid noroxoaconitine. Functionally, tumor suppressor serine/threonine-protein kinase involved in mTORC1 signaling and post-transcriptional regulation. Phosphorylates FOXO3, ERK3/MAPK6, ERK4/MAPK4, HSP27/HSPB1, p53/TP53 and RHEB. Acts as a tumor suppressor by mediating Ras-induced senescence and phosphorylating p53/TP53. Involved in post-transcriptional regulation of MYC by mediating phosphorylation of FOXO3: phosphorylation of FOXO3 leads to promote nuclear localization of FOXO3, enabling expression of miR-34b and miR-34c, 2 post-transcriptional regulators of MYC that bind to the 3'UTR of MYC transcript and prevent MYC translation. Acts as a negative regulator of mTORC1 signaling by mediating phosphorylation and inhibition of RHEB. Part of the atypical MAPK signaling via its interaction with ERK3/MAPK6 or ERK4/MAPK4: the precise role of the complex formed with ERK3/MAPK6 or ERK4/MAPK4 is still unclear, but the complex follows a complex set of phosphorylation events: upon interaction with atypical MAPK (ERK3/MAPK6 or ERK4/MAPK4), ERK3/MAPK6 (or ERK4/MAPK4) is phosphorylated and then mediates phosphorylation and activation of MAPKAPK5, which in turn phosphorylates ERK3/MAPK6 (or ERK4/MAPK4). Mediates phosphorylation of HSP27/HSPB1 in response to PKA/PRKACA stimulation, inducing F-actin rearrangement. In Mus musculus (Mouse), this protein is MAP kinase-activated protein kinase 5 (Mapkapk5).